The following is a 233-amino-acid chain: Large ribosomal subunit protein uL1 (233 aa).

The protein belongs to the universal ribosomal protein uL1 family. Part of the 50S ribosomal subunit.

Binds directly to 23S rRNA. The L1 stalk is quite mobile in the ribosome, and is involved in E site tRNA release. Its function is as follows. Protein L1 is also a translational repressor protein, it controls the translation of the L11 operon by binding to its mRNA. This is Large ribosomal subunit protein uL1 from Vibrio campbellii (strain ATCC BAA-1116).